A 273-amino-acid chain; its full sequence is Photosystem I chlorophyll a/b-binding protein 3-1, chloroplastic (273 aa).

Residues 1–39 (MAAQALVSSSLTSSVQTARQIFGSKPVASASQKKSSFVV) constitute a chloroplast transit peptide. Position 56 (Trp-56) interacts with chlorophyll b. Chlorophyll a is bound by residues Phe-76, Ser-82, and Glu-100. Residue Arg-105 participates in chlorophyll b binding. The chain crosses the membrane as a helical span at residues 106–126 (FAMLGAAGAIAPEILGKAGLI). Position 140 (Ile-140) interacts with chlorophyll b. A helical transmembrane segment spans residues 146 to 166 (YTYWADNYTLFVLEMALMGFA). Glu-167 and Arg-170 together coordinate chlorophyll b. Ser-195 bears the Phosphoserine mark. Chlorophyll a contacts are provided by Lys-224, Glu-225, Asn-228, Arg-230, Gln-242, and His-257. The chain crosses the membrane as a helical span at residues 231–251 (LAMLAILGYFIQGLVTGVGPY). Position 272 (Phe-272) interacts with chlorophyll b.

Belongs to the light-harvesting chlorophyll a/b-binding (LHC) protein family. In terms of assembly, the LHC complex consists of chlorophyll a-b binding proteins. Red-emitting heterodimer with LHCA2. Interacts with LHCA5. Binds to carotenoids. Binds at least 14 chlorophylls (8 Chl-a and 6 Chl-b) and carotenoids such as lutein and neoxanthin. serves as cofactor. In terms of processing, photoregulated by reversible phosphorylation of its threonine residues.

The protein resides in the plastid. It localises to the chloroplast thylakoid membrane. Its function is as follows. The light-harvesting complex (LHC) functions as a light receptor, it captures and delivers excitation energy to photosystems with which it is closely associated, here photosystem I. The chain is Photosystem I chlorophyll a/b-binding protein 3-1, chloroplastic from Arabidopsis thaliana (Mouse-ear cress).